Here is a 1057-residue protein sequence, read N- to C-terminus: MPKRDDIQTILVIGSGPIIIGQAAEFDYAGTQACLALKEEGYRVILVNSNPATIMTDKEIADKVYIEPLTHDFIARIIRKEQPDALLPTLGGQTGLNMAIQLHDSGVLEANNVKLLGTELKSIQQAEDRELFRSLMNDLNVPVPESDIVNTVEQAFAFKDEVGYPLIVRPAFTMGGTGGGICYNDEELKEVVSNGLHYSPATQCLIEKSIAGYKEIEYEVMRDKNDNAIVVCNMENIDPVGIHTGDSIVVAPSQTLSDVEYQMLRDVSLKVIRALGIEGGCNVQLALDPHSFNYYIIEVNPRVSRSSALASKATGYPIAKLAAKIAVGLTLDEMLNPVTGTSYAAFEPTLDYVISKIPRFPFDKFEKGERELGTQMKATGEVMAIGRTYEESLLKAIRSLEYGVHHLGLPNGESFDLDYIKERISHQDDERLFFIGEAIRRGTTLEEIHNMTQIDYFFLNKFQNIINIEHELKNHPGDLDYLKYAKDYGFSDRVIAHRFGMTESEVYQLRQDNNIKPVYKMVDTCAAEFESTTPYYYGTYETENESIVTDKEKILVLGSGPIRIGQGVEFDYATVHAVWAIQNAGYEAIIVNNNPETVSTDFSISDKLYFEPLTEEDVMNIINLEQPKGVVVQFGGQTAINLADKLAKHGVKILGTTLENLNRAEDRKEFEALLHTIDVPQPKGKTATSPKEALENAREIGYPVVVRPSYVLGGRAMEIVNSDAELENYMEQAVKASPEHPVLVDRYLTGKEIEVDAISDGETVIIPGIMEHIERAGVHSGDSIAVYPPQTLSQEDIDTLEDYTIKLAKGLNIVGLINIQFVIAHDGVYVLEVNPRASRTVPFLSKITDIQMAQLAMQAIMGTRLKDLGYKQGVQPYSEGVFVKAPVFSFNKLKNVDVTLGPEMKSTGEVMGKDLTLEKALYKGLTGSGVEVKDHGTVLMTVSDKDKDEIVKIAHRLNEVGYKILATQGTAEKLKEDNIPVEVVGKIGGDDDLLTRIQNGEVQIVINTMTKGKEVERDGFQIRRTTVENGVPCLTSLDTANALTNVIESMTFSMRTM.

The tract at residues 1-401 (MPKRDDIQTI…SLLKAIRSLE (401 aa)) is carboxyphosphate synthetic domain. Arginine 129, arginine 169, glycine 175, glycine 176, lysine 208, isoleucine 210, glutamate 215, glycine 241, isoleucine 242, histidine 243, glutamine 284, and glutamate 298 together coordinate ATP. An ATP-grasp 1 domain is found at 133–327 (RSLMNDLNVP…IAKLAAKIAV (195 aa)). Mg(2+) contacts are provided by glutamine 284, glutamate 298, and asparagine 300. The Mn(2+) site is built by glutamine 284, glutamate 298, and asparagine 300. An oligomerization domain region spans residues 402 to 546 (YGVHHLGLPN…YGTYETENES (145 aa)). The tract at residues 547-929 (IVTDKEKILV…ALYKGLTGSG (383 aa)) is carbamoyl phosphate synthetic domain. One can recognise an ATP-grasp 2 domain in the interval 671 to 861 (EALLHTIDVP…MAQLAMQAIM (191 aa)). 10 residues coordinate ATP: arginine 707, arginine 746, leucine 748, glutamate 752, glycine 777, valine 778, histidine 779, serine 780, glutamine 820, and glutamate 832. Mg(2+)-binding residues include glutamine 820, glutamate 832, and asparagine 834. Glutamine 820, glutamate 832, and asparagine 834 together coordinate Mn(2+). Residues 930 to 1057 (VEVKDHGTVL…ESMTFSMRTM (128 aa)) enclose the MGS-like domain. Residues 930-1057 (VEVKDHGTVL…ESMTFSMRTM (128 aa)) are allosteric domain.

This sequence belongs to the CarB family. In terms of assembly, composed of two chains; the small (or glutamine) chain promotes the hydrolysis of glutamine to ammonia, which is used by the large (or ammonia) chain to synthesize carbamoyl phosphate. Tetramer of heterodimers (alpha,beta)4. It depends on Mg(2+) as a cofactor. Requires Mn(2+) as cofactor.

It carries out the reaction hydrogencarbonate + L-glutamine + 2 ATP + H2O = carbamoyl phosphate + L-glutamate + 2 ADP + phosphate + 2 H(+). The enzyme catalyses hydrogencarbonate + NH4(+) + 2 ATP = carbamoyl phosphate + 2 ADP + phosphate + 2 H(+). It participates in amino-acid biosynthesis; L-arginine biosynthesis; carbamoyl phosphate from bicarbonate: step 1/1. It functions in the pathway pyrimidine metabolism; UMP biosynthesis via de novo pathway; (S)-dihydroorotate from bicarbonate: step 1/3. Its function is as follows. Large subunit of the glutamine-dependent carbamoyl phosphate synthetase (CPSase). CPSase catalyzes the formation of carbamoyl phosphate from the ammonia moiety of glutamine, carbonate, and phosphate donated by ATP, constituting the first step of 2 biosynthetic pathways, one leading to arginine and/or urea and the other to pyrimidine nucleotides. The large subunit (synthetase) binds the substrates ammonia (free or transferred from glutamine from the small subunit), hydrogencarbonate and ATP and carries out an ATP-coupled ligase reaction, activating hydrogencarbonate by forming carboxy phosphate which reacts with ammonia to form carbamoyl phosphate. The polypeptide is Carbamoyl phosphate synthase large chain (Staphylococcus haemolyticus (strain JCSC1435)).